A 352-amino-acid chain; its full sequence is Mannonate dehydratase (352 aa).

This sequence belongs to the mannonate dehydratase family. Fe(2+) is required as a cofactor. Mn(2+) serves as cofactor.

The catalysed reaction is D-mannonate = 2-dehydro-3-deoxy-D-gluconate + H2O. Its pathway is carbohydrate metabolism; pentose and glucuronate interconversion. Functionally, catalyzes the dehydration of D-mannonate. The sequence is that of Mannonate dehydratase from Paraburkholderia phytofirmans (strain DSM 17436 / LMG 22146 / PsJN) (Burkholderia phytofirmans).